The chain runs to 974 residues: Translation initiation factor IF-2 (974 aa).

Disordered regions lie at residues 67 to 86 (TRKH…ARTI), 101 to 133 (DVAE…RREA), and 146 to 385 (RQER…TFQA). Low complexity predominate over residues 105 to 114 (GAEQGQAQVA). 2 stretches are compositionally biased toward basic and acidic residues: residues 121–133 (ELKR…RREA) and 146–181 (RQER…KRAA). Residues 182 to 197 (AEAAAAQQAAAQQAAE) are compositionally biased toward low complexity. Residues 210–261 (EEARAAAERAAQREAAKKAEDAAREAADKARAEQEEIRKRREAAEAEARAIR) show a composition bias toward basic and acidic residues. Low complexity predominate over residues 313 to 329 (PAGATPATTQAPAAGAG). The segment covering 358–371 (SSGGVDRGWRGGPK) has biased composition (gly residues). A tr-type G domain is found at 474–643 (PRPPVVTVMG…LLQAEVLELK (170 aa)). The G1 stretch occupies residues 483–490 (GHVDHGKT). GTP is bound at residue 483–490 (GHVDHGKT). The interval 508 to 512 (GITQH) is G2. The interval 529–532 (DTPG) is G3. GTP contacts are provided by residues 529–533 (DTPGH) and 583–586 (NKID). Residues 583–586 (NKID) form a G4 region. Residues 619–621 (SAK) are G5.

It belongs to the TRAFAC class translation factor GTPase superfamily. Classic translation factor GTPase family. IF-2 subfamily.

It localises to the cytoplasm. Its function is as follows. One of the essential components for the initiation of protein synthesis. Protects formylmethionyl-tRNA from spontaneous hydrolysis and promotes its binding to the 30S ribosomal subunits. Also involved in the hydrolysis of GTP during the formation of the 70S ribosomal complex. In Burkholderia vietnamiensis (strain G4 / LMG 22486) (Burkholderia cepacia (strain R1808)), this protein is Translation initiation factor IF-2.